The chain runs to 99 residues: Small ribosomal subunit protein bS20 (99 aa).

This sequence belongs to the bacterial ribosomal protein bS20 family.

Its function is as follows. Binds directly to 16S ribosomal RNA. In Thermomicrobium roseum (strain ATCC 27502 / DSM 5159 / P-2), this protein is Small ribosomal subunit protein bS20.